The primary structure comprises 457 residues: MQKYIVEARSLLALAIPVVIAQLSQTAMGVVDTIMAGSVSATDMAAVAVGTSIWLPAILFGHGLLLALTPTVAQLNGSGRRSQIAHQVRQGFWLALCVSVLIMLVLYNSDHVIKQMDNIDPVLAQKAVGFLHAIMWGVPGYLFFQVLRNQCEGLSKTKPGMVIGFVGLLVNIPINYIFIYGKFGAPALGGVGCGVATASVYWVMFLMMRWYVTRARSQQDIKLEKGFAAPDWQVMKRLSGLGLPVALALFFEVTLFAVVALLVSPLGIVAVAGHQIALNFSSLMFMLPMSLSVAATIRVGFRLGQGSVEQAQVAAYTSMAVGLLLASVTAVFTIVFREHIALLYNKTPEVVTMASHLMLLAALYQLSDAVQVIGSGVLRGYKDTRSIFFITFTAYWLLGLPSGYLLGLTDYILPAMGPAGFWIGFIIGLTAAAILMVLRIRWLQKQPTAFILQRAAH.

A run of 12 helical transmembrane segments spans residues 11–31, 46–66, 93–113, 127–147, 160–180, 188–208, 243–263, 283–301, 316–336, 357–377, 387–407, and 418–438; these read LLALAIPVVIAQLSQTAMGVV, AVAVGTSIWLPAILFGHGLLL, WLALCVSVLIMLVLYNSDHVI, AVGFLHAIMWGVPGYLFFQVL, GMVIGFVGLLVNIPINYIFIY, LGGVGCGVATASVYWVMFLMM, LPVALALFFEVTLFAVVALLV, LMFMLPMSLSVAATIRVGF, YTSMAVGLLLASVTAVFTIVF, LMLLAALYQLSDAVQVIGSGV, IFFITFTAYWLLGLPSGYLLG, and PAGFWIGFIIGLTAAAILMVL.

Belongs to the multi antimicrobial extrusion (MATE) (TC 2.A.66.1) family. MdtK subfamily.

The protein localises to the cell inner membrane. Its function is as follows. Multidrug efflux pump that functions probably as a Na(+)/drug antiporter. This chain is Multidrug resistance protein MdtK, found in Yersinia pseudotuberculosis serotype O:1b (strain IP 31758).